Reading from the N-terminus, the 65-residue chain is Small ribosomal subunit protein bS21 (65 aa).

Residues 39 to 65 form a disordered region; sequence EKPSIKRKKKAIAARKRALKKQRKMMD. Over residues 43 to 65 the composition is skewed to basic residues; it reads IKRKKKAIAARKRALKKQRKMMD.

The protein belongs to the bacterial ribosomal protein bS21 family.

This chain is Small ribosomal subunit protein bS21, found in Pelobacter propionicus (strain DSM 2379 / NBRC 103807 / OttBd1).